The following is a 316-amino-acid chain: MTNEFHHVTVLLHETIDYLDVKPDGVYVDATLGGAGHSEYLLSKLSPKGHLYAFDQDATAIEHAKKRLAPYIEKGMVTFVQDNFRHLKLQLEKLGVDEIDGICYDLGVSSPQLDERERGFSYKQDAPLDMRMNRHADFSAYQVVNDYDYHDLVRIFFKYGEDKFSKQIARKIEQARQIKPIETTTELAEIIKSAKPAKELKKKGHPAKQIFQAIRIEVNDELGAADESIQQAIDLLAVDGRISVITFHSLEDRLTKQLFKEASTVDVPKGLPFIPDDLKPKLELISRKPILPSAEELELNNRAHSAKLRVAKKVHK.

S-adenosyl-L-methionine contacts are provided by residues 35–37 (AGH), Asp55, Phe84, Asp105, and Gln112.

The protein belongs to the methyltransferase superfamily. RsmH family.

The protein resides in the cytoplasm. The enzyme catalyses cytidine(1402) in 16S rRNA + S-adenosyl-L-methionine = N(4)-methylcytidine(1402) in 16S rRNA + S-adenosyl-L-homocysteine + H(+). Its function is as follows. Specifically methylates the N4 position of cytidine in position 1402 (C1402) of 16S rRNA. The chain is Ribosomal RNA small subunit methyltransferase H from Streptococcus gordonii (strain Challis / ATCC 35105 / BCRC 15272 / CH1 / DL1 / V288).